The primary structure comprises 114 residues: Flagellar hook-basal body complex protein FliE (114 aa).

It belongs to the FliE family.

The protein resides in the bacterial flagellum basal body. The chain is Flagellar hook-basal body complex protein FliE from Desulfitobacterium hafniense (strain Y51).